A 329-amino-acid chain; its full sequence is BRISC and BRCA1-A complex member 1 (329 aa).

Methionine 1 carries the N-acetylmethionine modification. Positions 1–84 (MEVAEPSSPT…VPPPAPEVQI (84 aa)) are disordered. Serine 8 carries the post-translational modification Phosphoserine. Residues 10–19 (TEEEEEEEEH) are compositionally biased toward acidic residues. Serine 29, serine 49, serine 57, and serine 62 each carry phosphoserine. Threonine 65 is subject to Phosphothreonine. Position 66 is a phosphoserine (serine 66). The VWFA-like stretch occupies residues 95–298 (VIICLDLSEE…LELHNCMAKL (204 aa)).

It belongs to the BABAM1 family. In terms of assembly, component of the ARISC complex, at least composed of UIMC1/RAP80, ABRAXAS1, BRCC3/BRCC36, BABAM2 and BABAM1/NBA1. Component of the BRCA1-A complex, at least composed of BRCA1, BARD1, UIMC1/RAP80, ABRAXAS1, BRCC3/BRCC36, BABAM2 and BABAM1/NBA1. In the BRCA1-A complex, interacts directly with ABRAXAS1 and BABAM2. Component of the BRISC complex, at least composed of ABRAXAS2, BRCC3/BRCC36, BABAM2 and BABAM1/NBA1. Identified in a complex with SHMT2 and the other subunits of the BRISC complex.

It localises to the cytoplasm. The protein resides in the nucleus. In terms of biological role, component of the BRCA1-A complex, a complex that specifically recognizes 'Lys-63'-linked ubiquitinated histones H2A and H2AX at DNA lesions sites, leading to target the BRCA1-BARD1 heterodimer to sites of DNA damage at double-strand breaks (DSBs). The BRCA1-A complex also possesses deubiquitinase activity that specifically removes 'Lys-63'-linked ubiquitin on histones H2A and H2AX. In the BRCA1-A complex, it is required for the complex integrity and its localization at DSBs. Component of the BRISC complex, a multiprotein complex that specifically cleaves 'Lys-63'-linked ubiquitin in various substrates. In these 2 complexes, it is probably required to maintain the stability of BABAM2 and help the 'Lys-63'-linked deubiquitinase activity mediated by BRCC3/BRCC36 component. The BRISC complex is required for normal mitotic spindle assembly and microtubule attachment to kinetochores via its role in deubiquitinating NUMA1. Plays a role in interferon signaling via its role in the deubiquitination of the interferon receptor IFNAR1; deubiquitination increases IFNAR1 activity by enhancing its stability and cell surface expression. Down-regulates the response to bacterial lipopolysaccharide (LPS) via its role in IFNAR1 deubiquitination. The polypeptide is BRISC and BRCA1-A complex member 1 (BABAM1) (Homo sapiens (Human)).